Reading from the N-terminus, the 484-residue chain is ATP-dependent rRNA helicase RRP3 (484 aa).

A compositionally biased stretch (polar residues) spans 1–10; sequence MAIVGSNSVS. A disordered region spans residues 1–61; it reads MAIVGSNSVS…SSQKSKNIVE (61 aa). Basic and acidic residues predominate over residues 18–54; the sequence is RNDARDLAEKIKRNALKKQEQDKKQQLEEESKPESSQ. Residues 71–99 carry the Q motif motif; sequence STFSELKLVPELLEAIQQMKFSKPTPIQS. Residues 102–273 enclose the Helicase ATP-binding domain; it reads IPHALEGKDI…RASLHNPVRV (172 aa). Residue 115–122 coordinates ATP; that stretch reads AQTGSGKT. The DEAD box signature appears at 221–224; sequence DEAD. One can recognise a Helicase C-terminal domain in the interval 300–444; the sequence is YLIHLLNEFV…KDPSPPKAML (145 aa). The segment at 460 to 484 is disordered; the sequence is RQTKEFHEKTRRGRRGKDDKDREEH. Over residues 475-484 the composition is skewed to basic and acidic residues; that stretch reads GKDDKDREEH.

This sequence belongs to the DEAD box helicase family. DDX47/RRP3 subfamily. In terms of assembly, interacts with the SSU processome.

It is found in the nucleus. The catalysed reaction is ATP + H2O = ADP + phosphate + H(+). Functionally, ATP-dependent rRNA helicase required for pre-ribosomal RNA processing. Involved in the maturation of the 35S-pre-rRNA and to its cleavage to mature 18S rRNA. The sequence is that of ATP-dependent rRNA helicase RRP3 from Scheffersomyces stipitis (strain ATCC 58785 / CBS 6054 / NBRC 10063 / NRRL Y-11545) (Yeast).